The primary structure comprises 134 residues: Protein Turandot E (134 aa).

The signal sequence occupies residues 1 to 38; the sequence is MSNTRTVHSSTSISKMNSALQISCLLVVLGCLLGSGHC.

Belongs to the Turandot family.

Its subcellular location is the secreted. Functionally, a humoral factor that may play a role in stress tolerance. The sequence is that of Protein Turandot E from Drosophila melanogaster (Fruit fly).